The primary structure comprises 276 residues: ESX-2 secretion-associated protein EspG2 (276 aa).

This sequence belongs to the EspG family. Interacts specifically with ESX-2-dependent PE/PPE proteins.

It is found in the cytoplasm. Functionally, specific chaperone for cognate PE/PPE proteins. Plays an important role in preventing aggregation of PE/PPE dimers. In Mycobacterium tuberculosis (strain CDC 1551 / Oshkosh), this protein is ESX-2 secretion-associated protein EspG2.